Here is a 194-residue protein sequence, read N- to C-terminus: A-type ATP synthase subunit E (194 aa).

The protein belongs to the V-ATPase E subunit family. Has multiple subunits with at least A(3), B(3), C, D, E, F, H, I and proteolipid K(x).

The protein resides in the cell membrane. In terms of biological role, component of the A-type ATP synthase that produces ATP from ADP in the presence of a proton gradient across the membrane. The polypeptide is A-type ATP synthase subunit E (Haloferax volcanii (strain ATCC 29605 / DSM 3757 / JCM 8879 / NBRC 14742 / NCIMB 2012 / VKM B-1768 / DS2) (Halobacterium volcanii)).